The sequence spans 330 residues: MALLDVKELSVHFGDKKTPFKAVDRISYQVAQGEVLGIVGESGSGKSVSSLAIMGLIDHPGRVSAESLQFENTDLLTLESKAKRQLIGADVAMIFQDPMTSLNPAYTVGFQIMEALKTHEGGTKKARKDRTLELLKLVGIPDPESRIDVYPHQLSGGMSQRVMIAMAIACRPKLLIADEPTTALDVTIQAQIMELLLELQKKECMSLILITHDLALVAEAAERIIVMYAGQIVEEGTAKDIFREPKHPYTQALLRSLPEFAEGKSRLESLQGVVPGKYDRPTGCLLNPRCPYATEYCRQVEPQLHHIGSRKVKCHTPLNEQGNPVEYQGA.

The ABC transporter domain occupies 6–254 (VKELSVHFGD…PKHPYTQALL (249 aa)). 40 to 47 (GESGSGKS) provides a ligand contact to ATP.

This sequence belongs to the ABC transporter superfamily.

It is found in the cell inner membrane. It catalyses the reaction a dipeptide(out) + ATP + H2O = a dipeptide(in) + ADP + phosphate + H(+). Part of the ABC transporter DppBCDF involved in dipeptide transport. Responsible for energy coupling to the transport system. In Haemophilus influenzae (strain ATCC 51907 / DSM 11121 / KW20 / Rd), this protein is Dipeptide transport ATP-binding protein DppD (dppD).